Consider the following 143-residue polypeptide: Cytotoxic L-amino-acid oxidase (143 aa).

The protein belongs to the flavin monoamine oxidase family. FAD is required as a cofactor.

The enzyme catalyses an L-alpha-amino acid + O2 + H2O = a 2-oxocarboxylate + H2O2 + NH4(+). Functionally, cytotoxic L-amino acid oxidase with high oxidase activity towards DL-methionine and L-methionine, L-phenylalanine, DL-norleucine, L-isoleucine, L-arginine, L-tyrosine, and DL-leucine. Shows relatively low activity towards DL-lysine and L-lysine, DL-asparagine, DL-valine, L-histidine, DL-threonine, DL-tryptophan, and L-glutamic acid; and no activity towards L-cysteine, L-glycine, L-proline, L-oxyproline, DL-serine, and DL-aspartic acid. Does not use benzylamine, ethanolamine, diethylamine, meta- and para-phenylendiamine, ortho-, meta- and para-aminophenols, or putrescin as a substrate. Acts as a toxin by inducing chromatin condensation, as well as DNA and nucleus fragmentation, which are typical for apoptosis. Probably induces cell damage indirectly via the generation of free radicals and oxidant agents that can trigger cell impairment and apoptosis by a caspase-independent pathway. This Amanita phalloides (Death cap) protein is Cytotoxic L-amino-acid oxidase.